The chain runs to 1253 residues: Pleckstrin homology-like domain family B member 2 (1253 aa).

Over residues Met1 to Asp12 the composition is skewed to basic and acidic residues. Disordered regions lie at residues Met1–Tyr43, Leu60–Asp159, and Asp187–Ser212. A compositionally biased stretch (polar residues) spans Asn29 to Tyr43. Ser71 and Ser73 each carry phosphoserine. Residues Pro74 to Tyr96 show a composition bias toward polar residues. The span at Ala126 to Glu144 shows a compositional bias: basic and acidic residues. Residues Ser157, Ser204, Ser212, Ser242, and Ser245 each carry the phosphoserine modification. The disordered stretch occupies residues Asn265–Leu286. Residues Ser330, Ser334, Ser348, Ser351, Ser384, Ser387, Ser415, Ser420, Ser468, Ser489, and Ser501 each carry the phosphoserine modification. Thr504 carries the post-translational modification Phosphothreonine. Ser513 bears the Phosphoserine mark. The tract at residues Leu525–Tyr567 is disordered. Thr550 and Thr574 each carry phosphothreonine. 2 coiled-coil regions span residues Ser584–Cys696 and Phe722–Leu807. The residue at position 898 (Thr898) is a Phosphothreonine. A coiled-coil region spans residues Ile1032 to Ile1098. A PH domain is found at Glu1143 to Glu1246.

As to quaternary structure, interacts with FLNC. Interacts with AMOTL2; interaction may facilitate PHLDB2 localization to the myotube podosome cortex that surrounds the core. Part of a cortical microtubule stabilization complex (CMSC) composed of KANK1, PPFIA1, PPFIBP1, ERC1/ELKS, PHLDB2/LL5beta, CLASPs, KIF21A and possibly additional interactors; within CMSCs KANK1 and PHLDB2/LL5beta appear to be the core components for targeting of microtubule-binding proteins KIF21A and CLASPs, whereas PPFIA1, PPFIBP1 and ERC1/ELKS serve as scaffolds for protein clustering.

It is found in the cytoplasm. Its subcellular location is the cell cortex. The protein resides in the membrane. The protein localises to the cell projection. It localises to the podosome. Seems to be involved in the assembly of the postsynaptic apparatus. May play a role in acetyl-choline receptor (AChR) aggregation in the postsynaptic membrane. This is Pleckstrin homology-like domain family B member 2 (PHLDB2) from Homo sapiens (Human).